The following is a 191-amino-acid chain: Nucleoside triphosphate pyrophosphatase (191 aa).

Asp70 (proton acceptor) is an active-site residue.

It belongs to the Maf family. Requires a divalent metal cation as cofactor.

Its subcellular location is the cytoplasm. It carries out the reaction a ribonucleoside 5'-triphosphate + H2O = a ribonucleoside 5'-phosphate + diphosphate + H(+). The enzyme catalyses a 2'-deoxyribonucleoside 5'-triphosphate + H2O = a 2'-deoxyribonucleoside 5'-phosphate + diphosphate + H(+). Nucleoside triphosphate pyrophosphatase. May have a dual role in cell division arrest and in preventing the incorporation of modified nucleotides into cellular nucleic acids. This Synechococcus sp. (strain WH7803) protein is Nucleoside triphosphate pyrophosphatase.